Here is a 207-residue protein sequence, read N- to C-terminus: Large ribosomal subunit protein uL3 (207 aa).

The interval 119–143 (GFQGSIKRNGQHRGPMAHGSRYHRR) is disordered.

This sequence belongs to the universal ribosomal protein uL3 family. In terms of assembly, part of the 50S ribosomal subunit. Forms a cluster with proteins L14 and L19.

In terms of biological role, one of the primary rRNA binding proteins, it binds directly near the 3'-end of the 23S rRNA, where it nucleates assembly of the 50S subunit. This Ligilactobacillus salivarius (strain UCC118) (Lactobacillus salivarius) protein is Large ribosomal subunit protein uL3.